We begin with the raw amino-acid sequence, 630 residues long: Chaperone protein HtpG (630 aa).

The segment at 1 to 339 is a; substrate-binding; that stretch reads MKGQETRGFQ…SNDLPLNVSR (339 aa). Residues 340 to 555 are b; that stretch reads EILQDNSITR…VDEMSTQMAK (216 aa). Positions 556 to 630 are c; it reads LFAAAGQQVP…MNQLLLSEKA (75 aa).

This sequence belongs to the heat shock protein 90 family. In terms of assembly, homodimer.

It localises to the cytoplasm. Functionally, molecular chaperone. Has ATPase activity. This Photorhabdus laumondii subsp. laumondii (strain DSM 15139 / CIP 105565 / TT01) (Photorhabdus luminescens subsp. laumondii) protein is Chaperone protein HtpG.